A 112-amino-acid polypeptide reads, in one-letter code: Colipase (112 aa).

The N-terminal stretch at 1–17 (MEKVLILLLVALAVAYA) is a signal peptide. Residues 18–22 (VPDPR) constitute a propeptide, enterostatin, activation peptide. 5 cysteine pairs are disulfide-bonded: Cys34–Cys45, Cys40–Cys56, Cys44–Cys78, Cys66–Cys86, and Cys80–Cys104.

It belongs to the colipase family. In terms of assembly, forms a 1:1 stoichiometric complex with pancreatic lipase.

It is found in the secreted. Colipase is a cofactor of pancreatic lipase. It allows the lipase to anchor itself to the lipid-water interface. Without colipase the enzyme is washed off by bile salts, which have an inhibitory effect on the lipase. Functionally, enterostatin has a biological activity as a satiety signal. The sequence is that of Colipase (CLPS) from Bos taurus (Bovine).